Consider the following 149-residue polypeptide: Calmodulin (149 aa).

Ala2 is subject to N-acetylalanine. 4 EF-hand domains span residues 8–43 (EQIA…LGQN), 44–79 (PTEA…KMKD), 81–116 (DSEE…LGEK), and 117–149 (LTDE…MMSK). The Ca(2+) site is built by Asp21, Asp23, Asp25, Thr27, Glu32, Asp57, Asp59, Asn61, Thr63, Glu68, Asp94, Asp96, Asn98, and Glu105. At Lys116 the chain carries N6,N6,N6-trimethyllysine. 5 residues coordinate Ca(2+): Asp130, Asp132, Asp134, Gln136, and Glu141.

This sequence belongs to the calmodulin family.

Functionally, calmodulin mediates the control of a large number of enzymes, ion channels and other proteins by Ca(2+). Among the enzymes to be stimulated by the calmodulin-Ca(2+) complex are a number of protein kinases and phosphatases. This is Calmodulin from Lumbricus rubellus (Humus earthworm).